We begin with the raw amino-acid sequence, 336 residues long: Galactose/methyl galactoside import permease protein MglC (336 aa).

9 helical membrane-spanning segments follow: residues 17–37 (GIYV…PTFL), 53–73 (IIIA…LSAG), 107–127 (LVIL…GIII), 128–148 (AYLN…VYGI), 181–201 (FRLS…WVLW), 227–247 (VALN…FGGL), 257–277 (TNNL…VGGV), 279–299 (FSGG…FTVI), and 306–326 (IGVN…FAVA).

Belongs to the binding-protein-dependent transport system permease family. AraH/RbsC subfamily. As to quaternary structure, the complex is composed of one ATP-binding protein (MglA), two transmembrane proteins (MglC) and a solute-binding protein (MglB).

It is found in the cell inner membrane. In terms of biological role, part of the ABC transporter complex MglABC involved in galactose/methyl galactoside import. Probably responsible for the translocation of the substrate across the membrane. The polypeptide is Galactose/methyl galactoside import permease protein MglC (mglC) (Salmonella typhimurium (strain LT2 / SGSC1412 / ATCC 700720)).